The following is a 319-amino-acid chain: Glutathione synthetase (319 aa).

One can recognise an ATP-grasp domain in the interval 125 to 311 (KLFTAWFPEL…ITGMLMDAIE (187 aa)). 151 to 207 (HQEHGDIILKPLDGMGGTSIFRVKQDDPNLSVIIETLTELSSRFCMAQNFLPAIKEG) contributes to the ATP binding site. Positions 281 and 283 each coordinate Mg(2+).

The protein belongs to the prokaryotic GSH synthase family. Mg(2+) is required as a cofactor. Requires Mn(2+) as cofactor.

It catalyses the reaction gamma-L-glutamyl-L-cysteine + glycine + ATP = glutathione + ADP + phosphate + H(+). It functions in the pathway sulfur metabolism; glutathione biosynthesis; glutathione from L-cysteine and L-glutamate: step 2/2. This is Glutathione synthetase from Yersinia pestis.